A 763-amino-acid polypeptide reads, in one-letter code: 5-methyltetrahydropteroyltriglutamate--homocysteine methyltransferase (763 aa).

5-methyltetrahydropteroyltri-L-glutamate-binding positions include arginine 16–lysine 19 and lysine 121. L-homocysteine contacts are provided by residues isoleucine 440–serine 442 and glutamate 493. L-methionine contacts are provided by residues isoleucine 440–serine 442 and glutamate 493. Residues arginine 524–cysteine 525 and tryptophan 570 contribute to the 5-methyltetrahydropteroyltri-L-glutamate site. Aspartate 608 provides a ligand contact to L-homocysteine. An L-methionine-binding site is contributed by aspartate 608. Position 614 (glutamate 614) interacts with 5-methyltetrahydropteroyltri-L-glutamate. 3 residues coordinate Zn(2+): histidine 650, cysteine 652, and glutamate 674. Histidine 703 functions as the Proton donor in the catalytic mechanism. Zn(2+) is bound at residue cysteine 735.

It belongs to the vitamin-B12 independent methionine synthase family. Zn(2+) is required as a cofactor.

The catalysed reaction is 5-methyltetrahydropteroyltri-L-glutamate + L-homocysteine = tetrahydropteroyltri-L-glutamate + L-methionine. Its pathway is amino-acid biosynthesis; L-methionine biosynthesis via de novo pathway; L-methionine from L-homocysteine (MetE route): step 1/1. Functionally, catalyzes the transfer of a methyl group from 5-methyltetrahydrofolate to homocysteine resulting in methionine formation. This is 5-methyltetrahydropteroyltriglutamate--homocysteine methyltransferase from Paraburkholderia phymatum (strain DSM 17167 / CIP 108236 / LMG 21445 / STM815) (Burkholderia phymatum).